We begin with the raw amino-acid sequence, 228 residues long: Ribonuclease H (228 aa).

In terms of domain architecture, RNase H type-1 spans Gly2 to Arg142. 4 residues coordinate Mg(2+): Asp11, Glu49, Asp71, and Asp134.

Belongs to the RNase H family. In terms of assembly, monomer. Mg(2+) is required as a cofactor.

The protein resides in the cytoplasm. It carries out the reaction Endonucleolytic cleavage to 5'-phosphomonoester.. In terms of biological role, endonuclease that specifically degrades the RNA of RNA-DNA hybrids. In Methylorubrum extorquens (strain PA1) (Methylobacterium extorquens), this protein is Ribonuclease H.